The following is a 149-amino-acid chain: 1,4-dihydroxy-2-naphthoyl-CoA hydrolase (149 aa).

Asp19 is an active-site residue.

It belongs to the 4-hydroxybenzoyl-CoA thioesterase family. DHNA-CoA hydrolase subfamily.

It carries out the reaction 1,4-dihydroxy-2-naphthoyl-CoA + H2O = 1,4-dihydroxy-2-naphthoate + CoA + H(+). Its pathway is cofactor biosynthesis; phylloquinone biosynthesis. The protein operates within quinol/quinone metabolism; 1,4-dihydroxy-2-naphthoate biosynthesis; 1,4-dihydroxy-2-naphthoate from chorismate: step 7/7. Catalyzes the hydrolysis of 1,4-dihydroxy-2-naphthoyl-CoA (DHNA-CoA) to 1,4-dihydroxy-2-naphthoate (DHNA), a reaction involved in phylloquinone (vitamin K1) biosynthesis. The chain is 1,4-dihydroxy-2-naphthoyl-CoA hydrolase from Synechococcus sp. (strain CC9902).